The sequence spans 254 residues: E3 ubiquitin-protein ligase NEURL3 (254 aa).

Residues 17-174 enclose the NHR domain; sequence ALSFHGNATG…TTKAIELLDP (158 aa). An RING-type zinc finger spans residues 197-236; it reads CVICFHNTANTRLMPCGHSHFCGSCAWHIFKDTARCPICR.

As to expression, expressed in alveolar epithelial type II cells.

It is found in the cytoplasm. The enzyme catalyses S-ubiquitinyl-[E2 ubiquitin-conjugating enzyme]-L-cysteine + [acceptor protein]-L-lysine = [E2 ubiquitin-conjugating enzyme]-L-cysteine + N(6)-ubiquitinyl-[acceptor protein]-L-lysine.. The protein operates within protein modification; protein ubiquitination. Functionally, E3 ubiquitin-protein ligase that plays a role in various biological processes such as lung development or innate immunity. Seems to utilize UBE2E1. Promotes innate antiviral response by catalyzing 'Lys-63'-linked ubiquitination of IRF7. Plays an essential role in TLR4-mediated activation of MAPK pathways by promoting 'Lys-48'-linked polyubiquitination of the phosphatase DUSP1/MKP1. The chain is E3 ubiquitin-protein ligase NEURL3 (Neurl3) from Mus musculus (Mouse).